A 743-amino-acid polypeptide reads, in one-letter code: NAD(P)H-quinone oxidoreductase subunit 5, chloroplastic (743 aa).

14 helical membrane-spanning segments follow: residues 9-29 (WIIPFVPLPVPMLIGVGLLLF), 40-60 (WAFHSVLLLSIVMIFSIDLSI), 89-109 (IDPLTSIMLILITTVGIMVLI), 125-145 (FAYMSFFSTSMLGLVTSSNLI), 147-167 (IYIFWELVGMCSYLLIGFWFT), 184-204 (IGDLGLLLGILGFYWITGSFE), 219-239 (NEVNLVFLTICAVLLFAGAVA), 258-278 (TPISALIHAATMVAAGIFLVA), 280-300 (LLPLFIVIPYILNLISFIGII), 396-416 (TAFFLGTLSLCGIPPLACFWS), 425-445 (WLYSPIFAIIACSTAGLTAFY), 548-568 (LLPLLVLVLFTLFVGAIGIPF), 607-627 (IFSVSIAYFGIVIASFLYKPV), and 723-743 (YLFLYLSYVSIFLLIYYFLNL).

The protein belongs to the complex I subunit 5 family. NDH is composed of at least 16 different subunits, 5 of which are encoded in the nucleus.

It localises to the plastid. It is found in the chloroplast thylakoid membrane. The catalysed reaction is a plastoquinone + NADH + (n+1) H(+)(in) = a plastoquinol + NAD(+) + n H(+)(out). It carries out the reaction a plastoquinone + NADPH + (n+1) H(+)(in) = a plastoquinol + NADP(+) + n H(+)(out). Its function is as follows. NDH shuttles electrons from NAD(P)H:plastoquinone, via FMN and iron-sulfur (Fe-S) centers, to quinones in the photosynthetic chain and possibly in a chloroplast respiratory chain. The immediate electron acceptor for the enzyme in this species is believed to be plastoquinone. Couples the redox reaction to proton translocation, and thus conserves the redox energy in a proton gradient. This chain is NAD(P)H-quinone oxidoreductase subunit 5, chloroplastic (ndhF), found in Carpenteria californica (Tree anemone).